Consider the following 225-residue polypeptide: DNA-binding response regulator MtrA (225 aa).

Residues Arg4 to Leu117 form the Response regulatory domain. A 4-aspartylphosphate modification is found at Asp53. Positions Ala125–Pro224 form a DNA-binding region, ompR/PhoB-type.

In terms of processing, phosphorylated by MtrB.

Member of the two-component regulatory system MtrA/MtrB. This is DNA-binding response regulator MtrA (mtrA) from Mycobacterium leprae (strain TN).